The following is a 202-amino-acid chain: Nucleoside triphosphate pyrophosphatase (202 aa).

The active-site Proton acceptor is the aspartate 79.

This sequence belongs to the Maf family. A divalent metal cation is required as a cofactor.

It is found in the cytoplasm. The catalysed reaction is a ribonucleoside 5'-triphosphate + H2O = a ribonucleoside 5'-phosphate + diphosphate + H(+). It catalyses the reaction a 2'-deoxyribonucleoside 5'-triphosphate + H2O = a 2'-deoxyribonucleoside 5'-phosphate + diphosphate + H(+). In terms of biological role, nucleoside triphosphate pyrophosphatase. May have a dual role in cell division arrest and in preventing the incorporation of modified nucleotides into cellular nucleic acids. This Rhodopseudomonas palustris (strain BisB18) protein is Nucleoside triphosphate pyrophosphatase.